A 240-amino-acid polypeptide reads, in one-letter code: BLOC-1-related complex subunit 8 homolog (240 aa).

2 disordered regions span residues 1-33 (MSSI…GSHG) and 163-240 (KTFS…EKIN). Composition is skewed to low complexity over residues 7-26 (SSTG…NNIS) and 163-179 (KTFS…QQQQ). A compositionally biased stretch (polar residues) spans 180–190 (TNLTPSKPTLS). Residues 196–205 (DNNNNNNNLN) are compositionally biased toward low complexity. A compositionally biased stretch (basic and acidic residues) spans 208–240 (EKIEKEEKIEKEDEGKEKDEKEKDDKDLNEKIN). Residues 211–239 (EKEEKIEKEDEGKEKDEKEKDDKDLNEKI) adopt a coiled-coil conformation.

Belongs to the BORCS8 family.

The protein resides in the lysosome membrane. May participate in the coupling of lysosomes to microtubule plus-end-directed kinesin motor. This Dictyostelium discoideum (Social amoeba) protein is BLOC-1-related complex subunit 8 homolog.